We begin with the raw amino-acid sequence, 456 residues long: MSNSAMSVVILAAGKGTRMYSDLPKVLHPLAGKPMVQHVIDAAMKLGAKNVHLVYGHGGDLLKNTLTDGALNWVLQAEQLGTGHAMQQAAPHFADDEDVLMLYGDVPLISVDTLQRLMAAKPQGGIGLLTVKLADPSGYGRIVRENDQVVGIVEHKDANEAQRQINEINTGILVANGRDLKRWLGMLNNDNAQGEFYITDIIALAHADGKKIEAVHPSRLSEVEGVNNRLQLSRLERIYQAEQSEKLLLAGVMLLDPARFDLRGELVHGRDISIDANVIIEGTVKLGDRVKIGAGCVLKNCVIGDDCEISPYSVLEDAVLAAECTVGPFARLRPGAELAVGAHVGNFVEMKKARLGKGSKAGHLSYLGDAEIGDDVNIGAGTITCNYDGANKHKTIIGDGVFVGSDTQLVAPVSVGKGSTIAAGTTVTRDIGEDELVLSRVKQVHIQGWQRPVKKK.

The pyrophosphorylase stretch occupies residues 1-229; that stretch reads MSNSAMSVVI…LSEVEGVNNR (229 aa). UDP-N-acetyl-alpha-D-glucosamine contacts are provided by residues 11–14, Lys25, Gln76, 81–82, 103–105, Gly140, Glu154, Asn169, and Asn227; these read LAAG, GT, and YGD. Mg(2+) is bound at residue Asp105. Asn227 lines the Mg(2+) pocket. Positions 230–250 are linker; the sequence is LQLSRLERIYQAEQSEKLLLA. An N-acetyltransferase region spans residues 251-456; that stretch reads GVMLLDPARF…QGWQRPVKKK (206 aa). UDP-N-acetyl-alpha-D-glucosamine-binding residues include Arg333 and Lys351. Residue His363 is the Proton acceptor of the active site. Residues Tyr366 and Asn377 each coordinate UDP-N-acetyl-alpha-D-glucosamine. Acetyl-CoA is bound by residues Ala380, 386-387, Ser405, Ala423, and Arg440; that span reads NY.

This sequence in the N-terminal section; belongs to the N-acetylglucosamine-1-phosphate uridyltransferase family. It in the C-terminal section; belongs to the transferase hexapeptide repeat family. As to quaternary structure, homotrimer. The cofactor is Mg(2+).

The protein localises to the cytoplasm. The catalysed reaction is alpha-D-glucosamine 1-phosphate + acetyl-CoA = N-acetyl-alpha-D-glucosamine 1-phosphate + CoA + H(+). It carries out the reaction N-acetyl-alpha-D-glucosamine 1-phosphate + UTP + H(+) = UDP-N-acetyl-alpha-D-glucosamine + diphosphate. Its pathway is nucleotide-sugar biosynthesis; UDP-N-acetyl-alpha-D-glucosamine biosynthesis; N-acetyl-alpha-D-glucosamine 1-phosphate from alpha-D-glucosamine 6-phosphate (route II): step 2/2. It functions in the pathway nucleotide-sugar biosynthesis; UDP-N-acetyl-alpha-D-glucosamine biosynthesis; UDP-N-acetyl-alpha-D-glucosamine from N-acetyl-alpha-D-glucosamine 1-phosphate: step 1/1. It participates in bacterial outer membrane biogenesis; LPS lipid A biosynthesis. Functionally, catalyzes the last two sequential reactions in the de novo biosynthetic pathway for UDP-N-acetylglucosamine (UDP-GlcNAc). The C-terminal domain catalyzes the transfer of acetyl group from acetyl coenzyme A to glucosamine-1-phosphate (GlcN-1-P) to produce N-acetylglucosamine-1-phosphate (GlcNAc-1-P), which is converted into UDP-GlcNAc by the transfer of uridine 5-monophosphate (from uridine 5-triphosphate), a reaction catalyzed by the N-terminal domain. This Serratia proteamaculans (strain 568) protein is Bifunctional protein GlmU.